We begin with the raw amino-acid sequence, 139 residues long: NADPH-dependent 7-cyano-7-deazaguanine reductase (139 aa).

The Thioimide intermediate role is filled by cysteine 34. Residue aspartate 41 is the Proton donor of the active site. Residues 56–58 (VEL) and 75–76 (HE) contribute to the substrate site.

This sequence belongs to the GTP cyclohydrolase I family. QueF type 1 subfamily.

It localises to the cytoplasm. It catalyses the reaction 7-aminomethyl-7-carbaguanine + 2 NADP(+) = 7-cyano-7-deazaguanine + 2 NADPH + 3 H(+). It functions in the pathway tRNA modification; tRNA-queuosine biosynthesis. Its function is as follows. Catalyzes the NADPH-dependent reduction of 7-cyano-7-deazaguanine (preQ0) to 7-aminomethyl-7-deazaguanine (preQ1). This chain is NADPH-dependent 7-cyano-7-deazaguanine reductase, found in Methylobacillus flagellatus (strain ATCC 51484 / DSM 6875 / VKM B-1610 / KT).